The sequence spans 370 residues: MKTKLILLYGGKSAEHEVSLQTAFSVINALDLEKFEAAPIYITNEGEWIQGPLLSGKLDFVEQLRFSATDTIKLATTESEKSEGEAISPAVLEADGQETVVFPLLHGPNGEDGTVQGLFEVLNIPYVGNGVLASSAAMDKIVMKKIFADAGIPQVPAVAVRLIDWKNYQEEMVAEMEEVLTYPVFVKPANLGSSVGISKATNKKELVDAMTEAFLYDRRVVVEQGVVAREIEMGVLGNDTPVCSVPGEILPEGAVATFYDYKAKYQDNNTALIIPTEVDPEILEQMKEYAIQAFLGLDASGLVRADFFLTEDNQLFLNEVNTMPGFTPYSMYPLLWQETGLPYGALIERLVDLAKERHAAKNALKYKLED.

The ATP-grasp domain maps to 144 to 352; it reads KKIFADAGIP…YGALIERLVD (209 aa). 177–232 contributes to the ATP binding site; it reads EEVLTYPVFVKPANLGSSVGISKATNKKELVDAMTEAFLYDRRVVVEQGVVAREIE. Positions 306, 319, and 321 each coordinate Mg(2+).

It belongs to the D-alanine--D-alanine ligase family. Mg(2+) is required as a cofactor. Requires Mn(2+) as cofactor.

The protein resides in the cytoplasm. The enzyme catalyses 2 D-alanine + ATP = D-alanyl-D-alanine + ADP + phosphate + H(+). It participates in cell wall biogenesis; peptidoglycan biosynthesis. Functionally, cell wall formation. The sequence is that of D-alanine--D-alanine ligase from Listeria monocytogenes serovar 1/2a (strain ATCC BAA-679 / EGD-e).